Consider the following 156-residue polypeptide: Ribosomal RNA large subunit methyltransferase H (156 aa).

S-adenosyl-L-methionine is bound by residues L73, G104, and 123-128; that span reads LSALTL.

The protein belongs to the RNA methyltransferase RlmH family. In terms of assembly, homodimer.

The protein localises to the cytoplasm. It catalyses the reaction pseudouridine(1915) in 23S rRNA + S-adenosyl-L-methionine = N(3)-methylpseudouridine(1915) in 23S rRNA + S-adenosyl-L-homocysteine + H(+). Specifically methylates the pseudouridine at position 1915 (m3Psi1915) in 23S rRNA. The sequence is that of Ribosomal RNA large subunit methyltransferase H from Shewanella sp. (strain MR-7).